A 493-amino-acid polypeptide reads, in one-letter code: Glycerol kinase (493 aa).

Residue threonine 11 coordinates ADP. Residues threonine 11, threonine 12, and serine 13 each contribute to the ATP site. Residue threonine 11 participates in sn-glycerol 3-phosphate binding. Residue arginine 15 coordinates ADP. The sn-glycerol 3-phosphate site is built by arginine 80, glutamate 81, tyrosine 132, and aspartate 241. Arginine 80, glutamate 81, tyrosine 132, aspartate 241, and glutamine 242 together coordinate glycerol. ADP contacts are provided by threonine 263 and glycine 306. Threonine 263, glycine 306, glutamine 310, and glycine 408 together coordinate ATP. Residue glycine 408 coordinates ADP.

It belongs to the FGGY kinase family.

It catalyses the reaction glycerol + ATP = sn-glycerol 3-phosphate + ADP + H(+). It participates in polyol metabolism; glycerol degradation via glycerol kinase pathway; sn-glycerol 3-phosphate from glycerol: step 1/1. Inhibited by fructose 1,6-bisphosphate (FBP). Key enzyme in the regulation of glycerol uptake and metabolism. Catalyzes the phosphorylation of glycerol to yield sn-glycerol 3-phosphate. This is Glycerol kinase from Cereibacter sphaeroides (strain KD131 / KCTC 12085) (Rhodobacter sphaeroides).